The following is a 1033-amino-acid chain: Ubiquitin carboxyl-terminal hydrolase 48 (1033 aa).

Positions 89 to 419 constitute a USP domain; that stretch reads VGLTNLGATC…NAYMLVYRLQ (331 aa). C98 (nucleophile) is an active-site residue. Catalysis depends on H351, which acts as the Proton acceptor. 3 consecutive DUSP domains span residues 457–552, 567–690, and 710–823; these read QSVA…KALC, NQLN…NKEC, and MMAS…RTRA. The disordered stretch occupies residues 610–639; sequence EQDEDAEHSNGKLNGNAPNKDEVNEEKREE. The interval 878–920 is disordered; sequence APELNVSSSEAEEEREENKPEGEQDPDFNQSNGGAKRQKLSHQ. The region spanning 931–1007 is the Ubiquitin-like domain; that stretch reads RRSTRHRKVR…ILLKADEPIA (77 aa).

The protein belongs to the peptidase C19 family.

The protein resides in the cytoplasm. It is found in the nucleus. The catalysed reaction is Thiol-dependent hydrolysis of ester, thioester, amide, peptide and isopeptide bonds formed by the C-terminal Gly of ubiquitin (a 76-residue protein attached to proteins as an intracellular targeting signal).. Its function is as follows. Recognizes and hydrolyzes the peptide bond at the C-terminal Gly of ubiquitin. Involved in the processing of poly-ubiquitin precursors as well as that of ubiquitinated proteins. The protein is Ubiquitin carboxyl-terminal hydrolase 48 (USP48) of Gallus gallus (Chicken).